The following is a 375-amino-acid chain: Succinyl-diaminopimelate desuccinylase (375 aa).

Residue histidine 66 participates in Zn(2+) binding. Aspartate 68 is an active-site residue. Aspartate 99 serves as a coordination point for Zn(2+). Residue glutamate 133 is the Proton acceptor of the active site. Zn(2+)-binding residues include glutamate 134, glutamate 162, and histidine 348.

Belongs to the peptidase M20A family. DapE subfamily. As to quaternary structure, homodimer. The cofactor is Zn(2+). Co(2+) serves as cofactor.

The catalysed reaction is N-succinyl-(2S,6S)-2,6-diaminopimelate + H2O = (2S,6S)-2,6-diaminopimelate + succinate. Its pathway is amino-acid biosynthesis; L-lysine biosynthesis via DAP pathway; LL-2,6-diaminopimelate from (S)-tetrahydrodipicolinate (succinylase route): step 3/3. In terms of biological role, catalyzes the hydrolysis of N-succinyl-L,L-diaminopimelic acid (SDAP), forming succinate and LL-2,6-diaminopimelate (DAP), an intermediate involved in the bacterial biosynthesis of lysine and meso-diaminopimelic acid, an essential component of bacterial cell walls. This chain is Succinyl-diaminopimelate desuccinylase, found in Stenotrophomonas maltophilia (strain K279a).